The chain runs to 162 residues: Transcriptional repressor NrdR (162 aa).

A zinc finger spans residues 3–34; sequence CPYCHHTDSRVLESRSAEGGQSIRRRRECLAC. The 91-residue stretch at 49–139 folds into the ATP-cone domain; the sequence is ITVIKRNGDR…VYRQFQGISD (91 aa).

It belongs to the NrdR family. Requires Zn(2+) as cofactor.

Negatively regulates transcription of bacterial ribonucleotide reductase nrd genes and operons by binding to NrdR-boxes. The protein is Transcriptional repressor NrdR of Thermosynechococcus vestitus (strain NIES-2133 / IAM M-273 / BP-1).